We begin with the raw amino-acid sequence, 181 residues long: RNA-binding protein (181 aa).

The tract at residues 106 to 181 (FLTSVNPGES…DANTRKSKRK (76 aa)) is disordered. Basic residues predominate over residues 141 to 157 (RNSKKGAKKSSSARKKK). Residues 160–172 (SSNSETDLSSDSD) are compositionally biased toward low complexity.

This sequence belongs to the phytoreovirus RNA-binding protein family.

Its subcellular location is the host cytoplasm. Its function is as follows. Constituent of viral factories. Binds to ssRNA and dsRNA. The polypeptide is RNA-binding protein (Rice dwarf virus (isolate Akita) (RDV)).